The chain runs to 1976 residues: Putative callose synthase 8 (1976 aa).

Topologically, residues 1–530 (MSHEIVPVDP…FWQIFRSFDR (530 aa)) are cytoplasmic. The chain crosses the membrane as a helical span at residues 531 to 551 (MWSFFVLSLQALIIMACHDVG). Topologically, residues 552–565 (SPLQVFNANIFEDV) are extracellular. A helical membrane pass occupies residues 566–586 (MSIFITSAILKLIKGILDIIF). Residues 587 to 602 (KWKARNTMPINEKKKR) are Cytoplasmic-facing. The chain crosses the membrane as a helical span at residues 603–623 (LVKLGFAAMWTIILPVLYSHS). Over 624 to 648 (RRKYICYFTNYKTWLGEWCFSPYMV) the chain is Extracellular. A helical transmembrane segment spans residues 649–669 (AVTIYLTGSAIELVLFFVPAI). Residues 670–707 (SKYIETSNHGIFKTLSWWGQPRLYVGRGMQETQVSQFK) lie on the Cytoplasmic side of the membrane. The chain crosses the membrane as a helical span at residues 708–728 (YTFFWILVLLTKFAFSYAFEI). Topologically, residues 729–759 (KPLIEPTRLIMKVGVRNYEWHEIFPEVKSNA) are extracellular. The helical transmembrane segment at 760 to 780 (AAIVAVWAPIMVVYFMDTQIW) threads the bilayer. Residues 781 to 1544 (YSVYCTIFGG…FDFFRMLSCY (764 aa)) lie on the Cytoplasmic side of the membrane. Residues 1545-1565 (FTTIGFYFSSLISVIGIYIYL) traverse the membrane as a helical segment. The Extracellular segment spans residues 1566–1595 (YGQLYLVLSGLQKTLILEAKVKNIKSLETA). Residues 1596–1616 (LASQSFIQLGLLTGLPMVMEI) traverse the membrane as a helical segment. The Cytoplasmic portion of the chain corresponds to 1617–1620 (GLEK). A helical membrane pass occupies residues 1621–1641 (GFLIAFQDFILMQLQLAAFFF). Residues 1642-1688 (TFSLGTKTHYFGRTILHGGAKYRPTGRKVVVFHANFSENYRLYSRSH) are Extracellular-facing. N1676 is a glycosylation site (N-linked (GlcNAc...) asparagine). A helical transmembrane segment spans residues 1689–1709 (FIKGFELMILLVVYELFKHTS). The Cytoplasmic segment spans residues 1710–1715 (QSNMAY). The helical transmembrane segment at 1716 to 1736 (SFITFSVWFMSFTWLCAPFLF) threads the bilayer. Over 1737–1790 (NPSGFTWEIIVGDWRDWNRWIKEQGGIGIQQDKSWQSWWNDEQAHLRGSGVGAR) the chain is Extracellular. A helical membrane pass occupies residues 1791 to 1811 (CLEIILSLRFFVYQYGLVYHL). The Cytoplasmic portion of the chain corresponds to 1812–1819 (DITQSNTN). The chain crosses the membrane as a helical span at residues 1820–1840 (IIVYALSWVVILATFFTVKAV). The Extracellular segment spans residues 1841-1856 (DLGRQLFSTRKHLVFR). A helical membrane pass occupies residues 1857 to 1877 (FFKVFVFVSILTIIITLANIC). Residues 1878-1884 (HLSVKDL) lie on the Cytoplasmic side of the membrane. A helical transmembrane segment spans residues 1885–1905 (LVSCLAFLPTGWGLILIAQAV). At 1906 to 1928 (RPKIEGTSLWEFTQVLARAYDYG) the chain is on the extracellular side. The chain crosses the membrane as a helical span at residues 1929–1949 (MGVVLFAPMAILAWLPIISAF). At 1950–1976 (QTRFLFNEAFNRRLQIQPILAGKKKNR) the chain is on the cytoplasmic side.

This sequence belongs to the glycosyltransferase 48 family.

It is found in the cell membrane. It carries out the reaction [(1-&gt;3)-beta-D-glucosyl](n) + UDP-alpha-D-glucose = [(1-&gt;3)-beta-D-glucosyl](n+1) + UDP + H(+). Functionally, involved in callose synthesis at the forming cell plate during cytokinesis. During plant growth and development, callose is found as a transitory component of the cell plate in dividing cells, is a major component of pollen mother cell walls and pollen tubes, and is found as a structural component of plasmodesmatal canals. The protein is Putative callose synthase 8 (CALS8) of Arabidopsis thaliana (Mouse-ear cress).